A 218-amino-acid chain; its full sequence is MAGRVEVSRKELTKFCREAGFEPSPGMLEAIAGYLELLLHWNRSMNLVGTRTWQDTFHTLVVDSLHLAAFLDTLPLPPEPEVWDLGAGAGLPGIPLRAAWQRGNYTMVEAREKRAMFLRMALARHPLPGTNVFQGRAEAFMPSRPPADLVVSRAFMPWRELLDFVSGHLAPGGQVVFLSLDPVPASLPEGWAVEAESLYGTRCGGRYFWSLRPIIVPN.

Residues Gly-86, Leu-91, 137-138, and Arg-153 each bind S-adenosyl-L-methionine; that span reads AE.

Belongs to the methyltransferase superfamily. RNA methyltransferase RsmG family.

It is found in the cytoplasm. It catalyses the reaction guanosine(527) in 16S rRNA + S-adenosyl-L-methionine = N(7)-methylguanosine(527) in 16S rRNA + S-adenosyl-L-homocysteine. Functionally, specifically methylates the N7 position of guanine in position 527 of 16S rRNA. This Nitratidesulfovibrio vulgaris (strain ATCC 29579 / DSM 644 / CCUG 34227 / NCIMB 8303 / VKM B-1760 / Hildenborough) (Desulfovibrio vulgaris) protein is Ribosomal RNA small subunit methyltransferase G.